The following is a 645-amino-acid chain: Meiosis induction protein kinase IME2/SME1 (645 aa).

The segment at 1-24 (MVEKRSRQSSSSGSEFSVPPDVDN) is disordered. The segment covering 8 to 17 (QSSSSGSEFS) has biased composition (low complexity). One can recognise a Protein kinase domain in the interval 38–386 (YQLIEKLGAG…AQELCEMPFF (349 aa)). ATP contacts are provided by residues 44–52 (LGAGSFGCV) and K67. Residue D193 is the Proton acceptor of the active site.

Belongs to the protein kinase superfamily. Ser/Thr protein kinase family.

The catalysed reaction is L-seryl-[protein] + ATP = O-phospho-L-seryl-[protein] + ADP + H(+). It carries out the reaction L-threonyl-[protein] + ATP = O-phospho-L-threonyl-[protein] + ADP + H(+). In terms of biological role, protein kinase which is essential for the initiation of meiosis and sporulation. The sequence is that of Meiosis induction protein kinase IME2/SME1 (IME2) from Saccharomyces cerevisiae (strain ATCC 204508 / S288c) (Baker's yeast).